The chain runs to 261 residues: Thiazole synthase (261 aa).

Residue Lys101 is the Schiff-base intermediate with DXP of the active site. 1-deoxy-D-xylulose 5-phosphate contacts are provided by residues Gly162, 188 to 189, and 210 to 211; these read AG and NT.

This sequence belongs to the ThiG family. As to quaternary structure, homotetramer. Forms heterodimers with either ThiH or ThiS.

The protein resides in the cytoplasm. The catalysed reaction is [ThiS sulfur-carrier protein]-C-terminal-Gly-aminoethanethioate + 2-iminoacetate + 1-deoxy-D-xylulose 5-phosphate = [ThiS sulfur-carrier protein]-C-terminal Gly-Gly + 2-[(2R,5Z)-2-carboxy-4-methylthiazol-5(2H)-ylidene]ethyl phosphate + 2 H2O + H(+). Its pathway is cofactor biosynthesis; thiamine diphosphate biosynthesis. Functionally, catalyzes the rearrangement of 1-deoxy-D-xylulose 5-phosphate (DXP) to produce the thiazole phosphate moiety of thiamine. Sulfur is provided by the thiocarboxylate moiety of the carrier protein ThiS. In vitro, sulfur can be provided by H(2)S. In Aromatoleum aromaticum (strain DSM 19018 / LMG 30748 / EbN1) (Azoarcus sp. (strain EbN1)), this protein is Thiazole synthase.